The primary structure comprises 165 residues: Myosin regulatory light chain 2B, cardiac muscle isoform (165 aa).

At A2 the chain carries N,N,N-trimethylalanine. EF-hand domains lie at 23–58 (TQIQ…LGRL), 93–128 (DPEE…QEGR), and 129–164 (FSQE…GEEK). Residues D36, N38, D40, and D47 each contribute to the Ca(2+) site.

As to quaternary structure, myosin is a hexamer of 2 heavy chains and 4 light chains. The N-terminus is blocked. N,N,N-trimethylalanine, found in other myosin light chains would not have been detected in the N-terminal tryptic peptide in PubMed:7319048 because it would remain trimethylated and ninhydrin negative after hydrolysis.

In Gallus gallus (Chicken), this protein is Myosin regulatory light chain 2B, cardiac muscle isoform.